Reading from the N-terminus, the 250-residue chain is UDP-2,3-diacylglucosamine hydrolase (250 aa).

Mn(2+) contacts are provided by D8, H10, D41, N79, and H115. Position 79–80 (N79–H80) interacts with substrate. 4 residues coordinate substrate: D123, T165, K168, and H196. Mn(2+) contacts are provided by H196 and H198.

This sequence belongs to the LpxH family. Mn(2+) serves as cofactor.

The protein resides in the cell inner membrane. The enzyme catalyses UDP-2-N,3-O-bis[(3R)-3-hydroxytetradecanoyl]-alpha-D-glucosamine + H2O = 2-N,3-O-bis[(3R)-3-hydroxytetradecanoyl]-alpha-D-glucosaminyl 1-phosphate + UMP + 2 H(+). It functions in the pathway glycolipid biosynthesis; lipid IV(A) biosynthesis; lipid IV(A) from (3R)-3-hydroxytetradecanoyl-[acyl-carrier-protein] and UDP-N-acetyl-alpha-D-glucosamine: step 4/6. Functionally, hydrolyzes the pyrophosphate bond of UDP-2,3-diacylglucosamine to yield 2,3-diacylglucosamine 1-phosphate (lipid X) and UMP by catalyzing the attack of water at the alpha-P atom. Involved in the biosynthesis of lipid A, a phosphorylated glycolipid that anchors the lipopolysaccharide to the outer membrane of the cell. In Blochmanniella pennsylvanica (strain BPEN), this protein is UDP-2,3-diacylglucosamine hydrolase.